A 63-amino-acid chain; its full sequence is Protein sigN172 (63 aa).

This Dictyostelium discoideum (Social amoeba) protein is Protein sigN172.